The primary structure comprises 513 residues: Sucrose transport protein SUC1 (513 aa).

The span at 1–11 (MGAYETEKPTK) shows a compositional bias: basic and acidic residues. The segment at 1–26 (MGAYETEKPTKDAAALETQSPEDFDQ) is disordered. At 1-32 (MGAYETEKPTKDAAALETQSPEDFDQPSPLRK) the chain is on the cytoplasmic side. Phosphoserine is present on serine 20. A helical transmembrane segment spans residues 33 to 53 (IISVASIAAGVQFGWALQLSL). Topologically, residues 54–67 (LTPYVQLLGIPHKW) are extracellular. The chain crosses the membrane as a helical span at residues 68–88 (SSLIWLCGPVSGMIVQPIVGF). Residues 89–101 (HSDRCRSKFGRRR) are Cytoplasmic-facing. Residues 102–122 (PFIATGAALVAVAVFLIGYAA) form a helical membrane-spanning segment. The Extracellular portion of the chain corresponds to 123 to 139 (DFGYKMGDKLEEKVKVR). The helical transmembrane segment at 140-160 (AIGIFALGFWILDVANNTLQG) threads the bilayer. The Cytoplasmic portion of the chain corresponds to 161–178 (PCRAFLADLAAGDAKRTR). A helical membrane pass occupies residues 179-199 (VANAFFSFFMAVGNVLGYAAG). Residues 200-224 (SYTNLHKMFPFTMTKACDIYCANLK) lie on the Extracellular side of the membrane. A helical transmembrane segment spans residues 225 to 245 (TCFFLSITLLLIVTVTSLWYV). The Cytoplasmic portion of the chain corresponds to 246 to 282 (NDKQWSPPPRNADDDEKTSSVPLFGEIFGAFKVMKRP). The chain crosses the membrane as a helical span at residues 283–303 (MWMLLIVTALNWIAWFPFLLF). The Extracellular segment spans residues 304-334 (DTDWMGREVFGGDSDGNERSKKLYSLGVQSG). A helical transmembrane segment spans residues 335–355 (AMGLMFNSIVLGFMSLGVEWI). At 356-365 (GRKLGGAKRL) the chain is on the cytoplasmic side. A helical membrane pass occupies residues 366–386 (WGIVNFILAAGLAMTVLVTKF). Residues 387-408 (AEDHRKTAGDLAGPSASVKAGA) are Extracellular-facing. A helical membrane pass occupies residues 409-429 (LSLFAVLGIPLAITFSTPFAL). The Cytoplasmic segment spans residues 430–441 (ASIFSSCSGAGQ). Residues 442–462 (GLSLGVLNLAIVIPQMIVSLG) form a helical membrane-spanning segment. At 463 to 474 (GGPFDALFGGGN) the chain is on the extracellular side. Residues 475–495 (LPAFIVAAIAAAISGVLALTV) form a helical membrane-spanning segment. The Cytoplasmic segment spans residues 496–513 (LPSPPPDAPKATTMGGFH).

The protein belongs to the glycoside-pentoside-hexuronide (GPH) cation symporter transporter (TC 2.A.2.4) family. Expressed in flowers (at protein level). Highly expressed in pollen. Expressed in pollen tubes and root vascular cylinder, pericycle and endodermis.

It localises to the membrane. It catalyses the reaction sucrose(out) + H(+)(out) = sucrose(in) + H(+)(in). Its pathway is glycan biosynthesis; sucrose metabolism. Its activity is regulated as follows. Inhibited by DEPC, protonophores (e.g. dinitrophenol and carbonyl cyanide m-chlorophenyl-hydrazone (CCCP)), and SH group inhibitors (e.g. N-ethylmaleimide (NEM) and p-chloromercuriphenyl sulphonic acid (PCMPS)). Its function is as follows. Responsible for the transport of sucrose into the cell, with the concomitant uptake of protons (symport system). This transport is both voltage- and energy-dependent. Can also transport other glucosides such as maltose, alpha-phenylglucoside and beta-phenylglucoside. May also transport biotin. Required for normal pollen germination and anthocyanin accumulation induced by sucrose. The polypeptide is Sucrose transport protein SUC1 (Arabidopsis thaliana (Mouse-ear cress)).